The following is a 516-amino-acid chain: uncharacterized protein (516 aa).

5 consecutive transmembrane segments (helical) span residues 10–27 (IRYP…GYWI), 32–54 (IGAF…GDFA), 64–83 (SFLF…PQFV), 95–117 (LLAV…ILGL), and 165–187 (AVCY…PALL). 2 consecutive RCK C-terminal domains span residues 208–291 (KPGL…SRAE) and 296–376 (RELL…NIGV). The next 4 membrane-spanning stretches (helical) occupy residues 386-408 (FVVL…FPVG), 412-430 (IALS…VGHL), 443-465 (GAIS…IHAG), and 480-502 (LLGG…HFVL).

It belongs to the AAE transporter (TC 2.A.81) family.

It localises to the cell membrane. This is an uncharacterized protein from Bradyrhizobium diazoefficiens (strain JCM 10833 / BCRC 13528 / IAM 13628 / NBRC 14792 / USDA 110).